Consider the following 227-residue polypeptide: Cytochrome c oxidase subunit 2 (227 aa).

Topologically, residues 1 to 14 (MAYPYELGFQDASS) are mitochondrial intermembrane. Residues 15 to 45 (PIMEELLHFHDHTLMIVFLISTLVLYLITIM) form a helical membrane-spanning segment. Residues 46–59 (LTTKLTHTSTMDAQ) lie on the Mitochondrial matrix side of the membrane. Residues 60-87 (EIETIWTILPAIILILIALPSLRILYMM) traverse the membrane as a helical segment. The Mitochondrial intermembrane segment spans residues 88–227 (DEINSPSLTV…DFEIWSSSML (140 aa)). Cu cation is bound by residues His-161, Cys-196, Glu-198, Cys-200, His-204, and Met-207. Residue Glu-198 participates in Mg(2+) binding.

It belongs to the cytochrome c oxidase subunit 2 family. Component of the cytochrome c oxidase (complex IV, CIV), a multisubunit enzyme composed of 14 subunits. The complex is composed of a catalytic core of 3 subunits MT-CO1, MT-CO2 and MT-CO3, encoded in the mitochondrial DNA, and 11 supernumerary subunits COX4I, COX5A, COX5B, COX6A, COX6B, COX6C, COX7A, COX7B, COX7C, COX8 and NDUFA4, which are encoded in the nuclear genome. The complex exists as a monomer or a dimer and forms supercomplexes (SCs) in the inner mitochondrial membrane with NADH-ubiquinone oxidoreductase (complex I, CI) and ubiquinol-cytochrome c oxidoreductase (cytochrome b-c1 complex, complex III, CIII), resulting in different assemblies (supercomplex SCI(1)III(2)IV(1) and megacomplex MCI(2)III(2)IV(2)). Found in a complex with TMEM177, COA6, COX18, COX20, SCO1 and SCO2. Interacts with TMEM177 in a COX20-dependent manner. Interacts with COX20. Interacts with COX16. Cu cation is required as a cofactor.

It is found in the mitochondrion inner membrane. The enzyme catalyses 4 Fe(II)-[cytochrome c] + O2 + 8 H(+)(in) = 4 Fe(III)-[cytochrome c] + 2 H2O + 4 H(+)(out). Component of the cytochrome c oxidase, the last enzyme in the mitochondrial electron transport chain which drives oxidative phosphorylation. The respiratory chain contains 3 multisubunit complexes succinate dehydrogenase (complex II, CII), ubiquinol-cytochrome c oxidoreductase (cytochrome b-c1 complex, complex III, CIII) and cytochrome c oxidase (complex IV, CIV), that cooperate to transfer electrons derived from NADH and succinate to molecular oxygen, creating an electrochemical gradient over the inner membrane that drives transmembrane transport and the ATP synthase. Cytochrome c oxidase is the component of the respiratory chain that catalyzes the reduction of oxygen to water. Electrons originating from reduced cytochrome c in the intermembrane space (IMS) are transferred via the dinuclear copper A center (CU(A)) of subunit 2 and heme A of subunit 1 to the active site in subunit 1, a binuclear center (BNC) formed by heme A3 and copper B (CU(B)). The BNC reduces molecular oxygen to 2 water molecules using 4 electrons from cytochrome c in the IMS and 4 protons from the mitochondrial matrix. This chain is Cytochrome c oxidase subunit 2 (MT-CO2), found in Cavia aperea (Brazilian guinea pig).